Consider the following 100-residue polypeptide: Cell division topological specificity factor (100 aa).

It belongs to the MinE family.

Its function is as follows. Prevents the cell division inhibition by proteins MinC and MinD at internal division sites while permitting inhibition at polar sites. This ensures cell division at the proper site by restricting the formation of a division septum at the midpoint of the long axis of the cell. This chain is Cell division topological specificity factor, found in Blochmanniella floridana.